Consider the following 839-residue polypeptide: Toll-like receptor 4 (839 aa).

The first 23 residues, 1–23 (MMSASRLAGTLIPAMAFLSCVRP), serve as a signal peptide directing secretion. At 24–631 (ESWEPCVEVV…SLNITCQMNK (608 aa)) the chain is on the extracellular side. Cys-29 and Cys-40 are oxidised to a cystine. A glycan (N-linked (GlcNAc...) asparagine) is linked at Asn-35. 5 LRR repeats span residues 55–76 (STKN…SFFS), 79–100 (ELQV…AYQS), 103–124 (HLST…AFSG), 127–148 (SLQK…PIGH), and 151–172 (TLKE…EYFS). Asn-173 carries an N-linked (GlcNAc...) asparagine glycan. LRR repeat units lie at residues 176-199 (NLEH…RVLH), 205-225 (NLSL…AFKE), and 227-247 (RLHK…KTCI). N-linked (GlcNAc...) asparagine glycosylation occurs at Asn-205. Cys-281 and Cys-306 are disulfide-bonded. Asn-282 and Asn-309 each carry an N-linked (GlcNAc...) asparagine glycan. LRR repeat units follow at residues 331-351 (GWQH…LKLK), 352-373 (SLKR…VDLP), 374-394 (SLEF…CSQS), 400-422 (SLKY…LGLE), 423-444 (QLEH…SVFL), 448-456 (NLIYLDISH), 472-495 (SLEV…FTEL), 497-518 (NLTF…AFNS), 521-542 (SLQV…PYKC), and 545-565 (SLQV…QELQ). An intrachain disulfide couples Cys-390 to Cys-391. 2 N-linked (GlcNAc...) asparagine glycosylation sites follow: Asn-497 and Asn-526. Asn-575 carries N-linked (GlcNAc...) asparagine glycosylation. One can recognise an LRRCT domain in the interval 579-629 (NDFACTCEHQSFLQWIKDQRQLLVEVERMECATPSDKQGMPVLSLNITCQM). Cystine bridges form between Cys-583–Cys-609 and Cys-585–Cys-627. N-linked (GlcNAc...) asparagine glycans are attached at residues Asn-624 and Asn-630. The helical transmembrane segment at 632–652 (TIIGVSVLSVLVVSVVAVLVY) threads the bilayer. Residues 653–839 (KFYFHLMLLA…GCNWQEATSI (187 aa)) are Cytoplasmic-facing. The TIR domain maps to 672-815 (NIYDAFVIYS…IFWRRLRKAL (144 aa)).

It belongs to the Toll-like receptor family. In terms of assembly, belongs to the lipopolysaccharide (LPS) receptor, a multi-protein complex containing at least CD14, LY96 and TLR4. Binding to bacterial LPS leads to homodimerization. Interacts with LY96 via the extracellular domain. Interacts with MYD88 and TIRAP via their respective TIR domains. Interacts with NOX4. Interacts with CNPY3 and HSP90B1; this interaction is required for proper folding in the endoplasmic reticulum. Interacts with MAP3K21; this interaction leads to negative regulation of TLR4 signaling. Interacts with CD36, following CD36 stimulation by oxLDL or amyloid-beta 42, and forms a heterodimer with TLR6. The trimeric complex is internalized and triggers inflammatory response. LYN kinase activity facilitates TLR4-TLR6 heterodimerization and signal initiation. Interacts with TICAM1 in response to LPS in a WDFY1-dependent manner. Interacts with WDFY1 in response to LPS. Interacts with SMPDL3B. Interacts with CEACAM1; upon lipopolysaccharide stimulation, forms a complex including TLR4 and the phosphorylated form of SYK and CEACAM1, which in turn, recruits PTPN6 that dephosphorylates SYK, reducing the production of reactive oxygen species (ROS) and lysosome disruption, which in turn, reduces the activity of the inflammasome. Interacts with RFTN1; the interaction occurs in response to lipopolysaccharide stimulation. Interacts with SCIMP; the interaction occurs in response to lipopolysaccharide stimulation and is enhanced by phosphorylation of SCIMP by LYN. This interaction facilitates the phosphorylation of TLR4 by LYN which elicits a selective cytokine response in macrophages. Interacts with TRAF3IP3. Interacts with TREM1; this interaction enhances TLR4-mediated inflammatory response. Interacts with ZG16B/PAUF. Interacts with CD82; this interaction inhibits TLR4-mediated signaling pathway. In terms of processing, phosphorylated on tyrosine residues by LYN after binding lipopolysaccharide. Post-translationally, ubiquitinated by RNF128 via 'Lys-28'-linked polyubiquitin chains, leading to proteasomal degradation.

The protein resides in the cell membrane. Its subcellular location is the early endosome. It localises to the cell projection. The protein localises to the ruffle. In terms of biological role, transmembrane receptor that functions as a pattern recognition receptor recognizing pathogen- and damage-associated molecular patterns (PAMPs and DAMPs) to induce innate immune responses via downstream signaling pathways. At the plasma membrane, cooperates with LY96 to mediate the innate immune response to bacterial lipopolysaccharide (LPS). Also involved in LPS-independent inflammatory responses triggered by free fatty acids, such as palmitate, and Ni(2+). Mechanistically, acts via MYD88, TIRAP and TRAF6, leading to NF-kappa-B activation, cytokine secretion and the inflammatory response. Alternatively, CD14-mediated TLR4 internalization via endocytosis is associated with the initiation of a MYD88-independent signaling via the TICAM1-TBK1-IRF3 axis leading to type I interferon production. In addition to the secretion of proinflammatory cytokines, initiates the activation of NLRP3 inflammasome and formation of a positive feedback loop between autophagy and NF-kappa-B signaling cascade. In complex with TLR6, promotes inflammation in monocytes/macrophages by associating with TLR6 and the receptor CD86. Upon ligand binding, such as oxLDL or amyloid-beta 42, the TLR4:TLR6 complex is internalized and triggers inflammatory response, leading to NF-kappa-B-dependent production of CXCL1, CXCL2 and CCL9 cytokines, via MYD88 signaling pathway, and CCL5 cytokine, via TICAM1 signaling pathway. In myeloid dendritic cells, vesicular stomatitis virus glycoprotein G but not LPS promotes the activation of IRF7, leading to type I IFN production in a CD14-dependent manner. In Pan paniscus (Pygmy chimpanzee), this protein is Toll-like receptor 4 (TLR4).